We begin with the raw amino-acid sequence, 265 residues long: 3-deoxy-manno-octulosonate cytidylyltransferase (265 aa).

This sequence belongs to the KdsB family.

It localises to the cytoplasm. The catalysed reaction is 3-deoxy-alpha-D-manno-oct-2-ulosonate + CTP = CMP-3-deoxy-beta-D-manno-octulosonate + diphosphate. The protein operates within nucleotide-sugar biosynthesis; CMP-3-deoxy-D-manno-octulosonate biosynthesis; CMP-3-deoxy-D-manno-octulosonate from 3-deoxy-D-manno-octulosonate and CTP: step 1/1. It participates in bacterial outer membrane biogenesis; lipopolysaccharide biosynthesis. In terms of biological role, activates KDO (a required 8-carbon sugar) for incorporation into bacterial lipopolysaccharide in Gram-negative bacteria. In Delftia acidovorans (strain DSM 14801 / SPH-1), this protein is 3-deoxy-manno-octulosonate cytidylyltransferase.